Here is a 371-residue protein sequence, read N- to C-terminus: Ligninase LG5 (371 aa).

An N-terminal signal peptide occupies residues 1–21; it reads MAFKKLLAVLTAALSLRAAQG. A propeptide spanning residues 22–27 is cleaved from the precursor; sequence AAVEKR. 4 disulfide bridges follow: cysteine 30-cysteine 42, cysteine 41-cysteine 311, cysteine 61-cysteine 146, and cysteine 275-cysteine 344. Histidine 74 acts as the Proton acceptor in catalysis. Residues aspartate 75, glycine 92, aspartate 94, and serine 96 each contribute to the Ca(2+) site. Histidine 202 contributes to the heme b binding site. Residues serine 203, aspartate 220, threonine 222, isoleucine 225, and aspartate 227 each coordinate Ca(2+). A glycan (N-linked (GlcNAc...) asparagine) is linked at asparagine 283. Positions 349–371 are disordered; the sequence is FPTLSTLPGPATSVARIPPPPGA.

The protein belongs to the peroxidase family. Ligninase subfamily. The cofactor is Ca(2+). Requires heme b as cofactor.

The enzyme catalyses 1-(3,4-dimethoxyphenyl)-2-(2-methoxyphenoxy)propane-1,3-diol + H2O2 = 3,4-dimethoxybenzaldehyde + guaiacol + glycolaldehyde + H2O. It carries out the reaction 2 (3,4-dimethoxyphenyl)methanol + H2O2 = 2 (3,4-dimethoxyphenyl)methanol radical + 2 H2O. The protein operates within secondary metabolite metabolism; lignin degradation. Depolymerization of lignin. Catalyzes the C(alpha)-C(beta) cleavage of the propyl side chains of lignin. The protein is Ligninase LG5 (GLG5) of Phanerodontia chrysosporium (White-rot fungus).